A 301-amino-acid chain; its full sequence is Cuticle collagen 2 (301 aa).

The N-terminal stretch at 1 to 37 (MDIDARIKAYKFVAYSAVTFSVVAVVSVFITLPMVYN) is a signal peptide. Triple-helical region regions lie at residues 105 to 134 (GPPG…PGKG), 153 to 176 (GPPG…PGSP), 183 to 212 (GPAG…PGAS), and 215 to 282 (GGPG…KGIC). Residues 109 to 284 (PGGSPGKPGK…GEGEKGICPK (176 aa)) form a disordered region. 2 stretches are compositionally biased toward pro residues: residues 143 to 170 (TQPP…PGPD) and 179 to 191 (PSGP…PGPA). A compositionally biased stretch (gly residues) spans 201-218 (GAPGGPGEPGASEQGGPG). The span at 219–229 (EPGPAGPPGPA) shows a compositional bias: pro residues. Over residues 252-261 (PGAAGAPGAD) the composition is skewed to low complexity. A compositionally biased stretch (gly residues) spans 262–274 (GNPGGPGTAGKPG).

It belongs to the cuticular collagen family. Collagen polypeptide chains are complexed within the cuticle by disulfide bonds and other types of covalent cross-links. Syncytial dorsal and ventral epidermis.

Nematode cuticles are composed largely of collagen-like proteins. The cuticle functions both as an exoskeleton and as a barrier to protect the worm from its environment. This Caenorhabditis elegans protein is Cuticle collagen 2 (col-2).